A 299-amino-acid chain; its full sequence is Acetylglutamate kinase (299 aa).

Substrate-binding positions include 72 to 73, Arg-94, and Asn-196; that span reads GG.

The protein belongs to the acetylglutamate kinase family. ArgB subfamily.

The protein localises to the cytoplasm. The enzyme catalyses N-acetyl-L-glutamate + ATP = N-acetyl-L-glutamyl 5-phosphate + ADP. It participates in amino-acid biosynthesis; L-arginine biosynthesis; N(2)-acetyl-L-ornithine from L-glutamate: step 2/4. Catalyzes the ATP-dependent phosphorylation of N-acetyl-L-glutamate. In Burkholderia vietnamiensis (strain G4 / LMG 22486) (Burkholderia cepacia (strain R1808)), this protein is Acetylglutamate kinase.